A 262-amino-acid polypeptide reads, in one-letter code: Mediator of RNA polymerase II transcription subunit 8 (262 aa).

A coiled-coil region spans residues 168-211 (LEEKEMGVKNVITGLKRQLDEGDEEDEEEEEEEEDMQGEEMEVV). The segment at 183-206 (KRQLDEGDEEDEEEEEEEEDMQGE) is disordered. Residues 188–206 (EGDEEDEEEEEEEEDMQGE) show a composition bias toward acidic residues.

It belongs to the Mediator complex subunit 8 family. As to quaternary structure, component of the Mediator complex.

The protein localises to the nucleus. Component of the Mediator complex, a coactivator involved in the regulated transcription of nearly all RNA polymerase II-dependent genes. Mediator functions as a bridge to convey information from gene-specific regulatory proteins to the basal RNA polymerase II transcription machinery. Mediator is recruited to promoters by direct interactions with regulatory proteins and serves as a scaffold for the assembly of a functional preinitiation complex with RNA polymerase II and the general transcription factors. The chain is Mediator of RNA polymerase II transcription subunit 8 (MED8) from Coccidioides immitis (strain RS) (Valley fever fungus).